The primary structure comprises 610 residues: Glutamine--fructose-6-phosphate aminotransferase [isomerizing] (610 aa).

Cys2 functions as the Nucleophile; for GATase activity in the catalytic mechanism. In terms of domain architecture, Glutamine amidotransferase type-2 spans 2–221 (CGIVGAVAQR…DGDVVDLQLA (220 aa)). SIS domains lie at 286 to 426 (AYKV…TRGR) and 459 to 600 (WADR…VDKP). The active-site For Fru-6P isomerization activity is Lys605.

In terms of assembly, homodimer.

The protein localises to the cytoplasm. The enzyme catalyses D-fructose 6-phosphate + L-glutamine = D-glucosamine 6-phosphate + L-glutamate. Its function is as follows. Catalyzes the first step in hexosamine metabolism, converting fructose-6P into glucosamine-6P using glutamine as a nitrogen source. This Bordetella pertussis (strain Tohama I / ATCC BAA-589 / NCTC 13251) protein is Glutamine--fructose-6-phosphate aminotransferase [isomerizing].